The chain runs to 177 residues: Peptide methionine sulfoxide reductase MsrA (177 aa).

Residue C14 is part of the active site.

Belongs to the MsrA Met sulfoxide reductase family.

The catalysed reaction is L-methionyl-[protein] + [thioredoxin]-disulfide + H2O = L-methionyl-(S)-S-oxide-[protein] + [thioredoxin]-dithiol. It carries out the reaction [thioredoxin]-disulfide + L-methionine + H2O = L-methionine (S)-S-oxide + [thioredoxin]-dithiol. Functionally, has an important function as a repair enzyme for proteins that have been inactivated by oxidation. Catalyzes the reversible oxidation-reduction of methionine sulfoxide in proteins to methionine. In Bacillus velezensis (strain DSM 23117 / BGSC 10A6 / LMG 26770 / FZB42) (Bacillus amyloliquefaciens subsp. plantarum), this protein is Peptide methionine sulfoxide reductase MsrA.